The primary structure comprises 111 residues: Small ribosomal subunit protein uS15c (111 aa).

It belongs to the universal ribosomal protein uS15 family. As to quaternary structure, part of the 30S ribosomal subunit.

The protein resides in the plastid. Its subcellular location is the chloroplast. This Staurastrum punctulatum (Green alga) protein is Small ribosomal subunit protein uS15c (rps15).